A 388-amino-acid polypeptide reads, in one-letter code: Yellow-related salivary protein SP03 (388 aa).

The signal sequence occupies residues Met1–Ala18. A glycan (N-linked (GlcNAc...) asparagine) is linked at Asn29.

Belongs to the major royal jelly protein family. As to expression, female salivary gland (at protein level).

The protein resides in the secreted. Probably modulates blood feeding of sand flies on vertebrate species by binding and sequestering different mediators involved in the host response. Binds biogenic amines. Binds noradrenaline with medium affinity. Binds octopamine with low affinity. Poorly binds histamine, adrenaline and serotonin. In Phlebotomus perniciosus (Phlebotomine sand fly), this protein is Yellow-related salivary protein SP03.